Consider the following 310-residue polypeptide: Methionyl-tRNA formyltransferase (310 aa).

109-112 (SLLP) lines the (6S)-5,6,7,8-tetrahydrofolate pocket.

The protein belongs to the Fmt family.

The enzyme catalyses L-methionyl-tRNA(fMet) + (6R)-10-formyltetrahydrofolate = N-formyl-L-methionyl-tRNA(fMet) + (6S)-5,6,7,8-tetrahydrofolate + H(+). Its function is as follows. Attaches a formyl group to the free amino group of methionyl-tRNA(fMet). The formyl group appears to play a dual role in the initiator identity of N-formylmethionyl-tRNA by promoting its recognition by IF2 and preventing the misappropriation of this tRNA by the elongation apparatus. This chain is Methionyl-tRNA formyltransferase, found in Agathobacter rectalis (strain ATCC 33656 / DSM 3377 / JCM 17463 / KCTC 5835 / VPI 0990) (Eubacterium rectale).